Reading from the N-terminus, the 276-residue chain is Rhomboid protease GlpG (276 aa).

The next 6 helical transmembrane spans lie at 94–114 (GPVT…MQIL), 142–162 (ALMH…WYLG), 169–189 (LGSG…GYVQ), 192–212 (FSGP…GYVW), 229–249 (LIIF…GMSM), and 250–270 (ANGA…VDSL). The active-site Nucleophile is the Ser201. The active site involves His254.

It belongs to the peptidase S54 family.

It is found in the cell inner membrane. The enzyme catalyses Cleaves type-1 transmembrane domains using a catalytic dyad composed of serine and histidine that are contributed by different transmembrane domains.. Functionally, rhomboid-type serine protease that catalyzes intramembrane proteolysis. The protein is Rhomboid protease GlpG of Escherichia coli O157:H7.